Consider the following 664-residue polypeptide: MRYLCKSILLAVHTILLVGSVCCSTDVHNTDDKYALIHVSAHDEQSLHLIKQLQLNDFKYDLDFWKSPSSISDKADIMVKRGKSERMLRQILSFANVTVSMSVPDVEKLIMRNEGTTSKSHLGFGSLSKWLHDDPILDSEPDLDLTKVGALKKAKYPFGDYASYADMVKYMRTIEFYYPRIAKIVRIGATHEGKPIEGLKIGARSSHKKRAVWVDGNIHAREWASSHTALYFINQLVSEYGKDAQITNYVDTLDFYIVPCLNPDGYEYTRTSPIPTVRLWRKNRSPELCRPSLWGGEKCCRGVDLNRNFRFHWAERGSSYEPCSNIYHGEEVFSEPETRAVRNFLATPEMKDRVDAFVTLHSYAQLWIYPYSHEEQNYPEDIGELRKTARKAINRLSRVYGTNYRMGTGADTLSPAAGGSDDWAKSALNVKYVYLIELRPQMELSNGFILHKKELIPTAVETFEGFREVVDAVLTLNNSTSSIGLSSGSNTSRKTISDLQMRKQQYRMRLLASQAAGSTTRSTTTLKTSTTSVSTTSEATSPSKTSRHFDRFTADLNSSTRARPTPPMAPPIMSPSTEFSTTTTEEEDVTGVIRSSSIASRATTYGFFTATKPSAFLDPECRDMRYSCGFWLKNNKQVCEEQQSFMRAQCAYTCKFCTSFIKRH.

The signal sequence occupies residues 1 to 23 (MRYLCKSILLAVHTILLVGSVCC). A propeptide spans 24 to 110 (STDVHNTDDK…MSVPDVEKLI (87 aa)) (activation peptide). The region spanning 160-473 (DYASYADMVK…EGFREVVDAV (314 aa)) is the Peptidase M14 domain. Histidine 219 and glutamate 222 together coordinate Zn(2+). Substrate-binding positions include 219–222 (HARE), arginine 281, and 306–307 (NR). Residue histidine 361 coordinates Zn(2+). 362–363 (SY) contributes to the substrate binding site. The active-site Proton donor/acceptor is the glutamate 437. A compositionally biased stretch (low complexity) spans 512–543 (ASQAAGSTTRSTTTLKTSTTSVSTTSEATSPS). The interval 512 to 590 (ASQAAGSTTR…TTTTEEEDVT (79 aa)) is disordered. The span at 564 to 573 (PTPPMAPPIM) shows a compositional bias: pro residues. The span at 574-583 (SPSTEFSTTT) shows a compositional bias: low complexity. Positions 621–657 (CRDMRYSCGFWLKNNKQVCEEQQSFMRAQCAYTCKFC) constitute a ShKT domain. 3 cysteine pairs are disulfide-bonded: cysteine 621–cysteine 657, cysteine 628–cysteine 650, and cysteine 639–cysteine 654.

Belongs to the peptidase M14 family. Zn(2+) serves as cofactor. In terms of tissue distribution, localizes in stripes along the cuticle.

The protein localises to the cytoplasmic vesicle. It is found in the secreted. Its function is as follows. May play a role in processing or organization of cuticle collagen proteins, including rol-6 and col-19. In Caenorhabditis elegans, this protein is Putative carboxypeptidase suro-1.